A 316-amino-acid chain; its full sequence is tRNA dimethylallyltransferase (316 aa).

Residue 17–24 (GPTASGKT) coordinates ATP. 19 to 24 (TASGKT) lines the substrate pocket. Interaction with substrate tRNA stretches follow at residues 42–45 (DSAL), 166–170 (QRLSR), 247–252 (RCVGYR), and 280–287 (KRQITWLR).

Belongs to the IPP transferase family. As to quaternary structure, monomer. It depends on Mg(2+) as a cofactor.

The enzyme catalyses adenosine(37) in tRNA + dimethylallyl diphosphate = N(6)-dimethylallyladenosine(37) in tRNA + diphosphate. Functionally, catalyzes the transfer of a dimethylallyl group onto the adenine at position 37 in tRNAs that read codons beginning with uridine, leading to the formation of N6-(dimethylallyl)adenosine (i(6)A). The protein is tRNA dimethylallyltransferase of Enterobacter sp. (strain 638).